The following is a 528-amino-acid chain: Lanosterol 14-alpha demethylase (528 aa).

A helical transmembrane segment spans residues 15-37 (LSLSVTQQISILLGVPFVYNLVW). Position 64 (Tyr-64) interacts with oteseconazole. Tyr-118 lines the itraconazole pocket. Gly-307 is a posaconazole binding site. His-377 is an oteseconazole binding site. Cys-470 lines the heme pocket.

The protein belongs to the cytochrome P450 family. Heme serves as cofactor.

It localises to the endoplasmic reticulum membrane. The catalysed reaction is a 14alpha-methyl steroid + 3 reduced [NADPH--hemoprotein reductase] + 3 O2 = a Delta(14) steroid + formate + 3 oxidized [NADPH--hemoprotein reductase] + 4 H2O + 4 H(+). It carries out the reaction a 14alpha-methyl steroid + reduced [NADPH--hemoprotein reductase] + O2 = a 14alpha-hydroxymethyl steroid + oxidized [NADPH--hemoprotein reductase] + H2O + H(+). The enzyme catalyses a 14alpha-hydroxymethyl steroid + reduced [NADPH--hemoprotein reductase] + O2 = a 14alpha-formyl steroid + oxidized [NADPH--hemoprotein reductase] + 2 H2O + H(+). It catalyses the reaction a 14alpha-formyl steroid + reduced [NADPH--hemoprotein reductase] + O2 = a Delta(14) steroid + formate + oxidized [NADPH--hemoprotein reductase] + H2O + 2 H(+). The catalysed reaction is lanosterol + 3 reduced [NADPH--hemoprotein reductase] + 3 O2 = 4,4-dimethyl-5alpha-cholesta-8,14,24-trien-3beta-ol + formate + 3 oxidized [NADPH--hemoprotein reductase] + 4 H2O + 4 H(+). It carries out the reaction lanosterol + reduced [NADPH--hemoprotein reductase] + O2 = 32-hydroxylanosterol + oxidized [NADPH--hemoprotein reductase] + H2O + H(+). The enzyme catalyses 32-hydroxylanosterol + reduced [NADPH--hemoprotein reductase] + O2 = 32-oxolanosterol + oxidized [NADPH--hemoprotein reductase] + 2 H2O + H(+). It catalyses the reaction 32-oxolanosterol + reduced [NADPH--hemoprotein reductase] + O2 = 4,4-dimethyl-5alpha-cholesta-8,14,24-trien-3beta-ol + formate + oxidized [NADPH--hemoprotein reductase] + H2O + 2 H(+). The catalysed reaction is eburicol + 3 reduced [NADPH--hemoprotein reductase] + 3 O2 = 14-demethyleburicol + formate + 3 oxidized [NADPH--hemoprotein reductase] + 4 H2O + 4 H(+). It carries out the reaction eburicol + reduced [NADPH--hemoprotein reductase] + O2 = 32-hydroxyeburicol + oxidized [NADPH--hemoprotein reductase] + H2O + H(+). The enzyme catalyses 32-hydroxyeburicol + reduced [NADPH--hemoprotein reductase] + O2 = 32-oxoeburicol + oxidized [NADPH--hemoprotein reductase] + 2 H2O + H(+). It catalyses the reaction 32-oxoeburicol + reduced [NADPH--hemoprotein reductase] + O2 = 14-demethyleburicol + formate + oxidized [NADPH--hemoprotein reductase] + H2O + 2 H(+). Its pathway is steroid biosynthesis; zymosterol biosynthesis; zymosterol from lanosterol: step 1/6. Its activity is regulated as follows. The catalytic activity is inhibited by the binding of azoles clotrimazole, miconazole, fluconazole, ketoconazole, oteseconazole (VT-1161), tetraconazole, the triazole SCH39304, and the triazole derivative ICI 153066. In terms of biological role, sterol 14alpha-demethylase that plays a critical role in the third module of ergosterol biosynthesis pathway, being ergosterol the major sterol component in fungal membranes that participates in a variety of functions. The third module or late pathway involves the ergosterol synthesis itself through consecutive reactions that mainly occur in the endoplasmic reticulum (ER) membrane. In filamentous fungi, during the initial step of this module, lanosterol (lanosta-8,24-dien-3beta-ol) can be metabolized to eburicol. Sterol 14alpha-demethylase catalyzes the three-step oxidative removal of the 14alpha-methyl group (C-32) of both these sterols in the form of formate, and converts eburicol and lanosterol to 14-demethyleburicol (4,4,24-trimethylergosta-8,14,24(28)-trienol) and 4,4-dimethyl-5alpha-cholesta-8,14,24-trien-3beta-ol, respectively, which are further metabolized by other enzymes in the pathway to ergosterol. Can also use substrates not intrinsic to fungi, such as 24,25-dihydrolanosterol (DHL), producing 4,4-dimethyl-8,14-cholestadien-3-beta-ol, but at lower rates than the endogenous substrates. This is Lanosterol 14-alpha demethylase from Candida albicans (strain SC5314 / ATCC MYA-2876) (Yeast).